We begin with the raw amino-acid sequence, 93 residues long: Defensin-like protein 209 (93 aa).

An N-terminal signal peptide occupies residues 1-19; sequence MKITILFLTLLVLSSSCTS. 3 disulfide bridges follow: Cys63-Cys80, Cys66-Cys85, and Cys70-Cys87.

Belongs to the DEFL family.

It is found in the secreted. The polypeptide is Defensin-like protein 209 (Arabidopsis thaliana (Mouse-ear cress)).